The sequence spans 187 residues: Putative zinc finger protein 833 (187 aa).

6 C2H2-type zinc fingers span residues 10-32, 38-60, 66-88, 94-116, 122-144, and 150-172; these read YKCKFCGKAFDNLHLYLTHERTH, YECNKCGKAFSCSSSIRKHARIH, YICKQCGKAFRYSSSIRNHENTH, CECKQCGKAFSYSSYFRIHERIH, YKCKECGKTFTYPSAFHKHKSTH, and YECKECGKAFDCFSSFHSHEGVH.

The protein is Putative zinc finger protein 833 (ZNF833P) of Homo sapiens (Human).